A 1011-amino-acid chain; its full sequence is Protein argonaute 1C (1011 aa).

The span at 1–11 shows a compositional bias: basic residues; sequence MASRRPTHRHH. 2 disordered regions span residues 1 to 95 and 107 to 147; these read MASR…SPLA and RPSE…PLRP. 2 stretches are compositionally biased toward low complexity: residues 28-53 and 61-92; these read ARYA…ARGA and QQQQ…ASSS. Positions 127–140 are enriched in polar residues; the sequence is ATTTPHHIPSSSKS. Residues 352–462 form the PAZ domain; it reads PVIDFVAQLL…LPMEVCKIVE (111 aa). One can recognise a Piwi domain in the interval 638–959; the sequence is LLIGILPDNN…AAFRARFYME (322 aa). The span at 963-982 shows a compositional bias: low complexity; it reads SDSSSVVSGPGVRGPLSGSS. The interval 963–994 is disordered; it reads SDSSSVVSGPGVRGPLSGSSTSRTRAPGGAAV.

This sequence belongs to the argonaute family. Ago subfamily.

In terms of biological role, probably involved in the RNA silencing pathway. May bind to short RNAs such as microRNAs (miRNAs) or short interfering RNAs (siRNAs), and represses the translation of mRNAs which are complementary to them. The protein is Protein argonaute 1C (AGO1C) of Oryza sativa subsp. japonica (Rice).